The following is a 261-amino-acid chain: tRNA pseudouridine synthase A (261 aa).

Asp53 (nucleophile) is an active-site residue. Tyr111 lines the substrate pocket.

It belongs to the tRNA pseudouridine synthase TruA family. As to quaternary structure, homodimer.

It catalyses the reaction uridine(38/39/40) in tRNA = pseudouridine(38/39/40) in tRNA. In terms of biological role, formation of pseudouridine at positions 38, 39 and 40 in the anticodon stem and loop of transfer RNAs. In Shouchella clausii (strain KSM-K16) (Alkalihalobacillus clausii), this protein is tRNA pseudouridine synthase A.